The primary structure comprises 147 residues: uncharacterized protein (147 aa).

The chain crosses the membrane as a helical span at residues 63 to 79; that stretch reads LFIVACSAVFATIAYIN.

The protein belongs to the FUN14 family.

It is found in the membrane. This is an uncharacterized protein from Schizosaccharomyces pombe (strain 972 / ATCC 24843) (Fission yeast).